The chain runs to 134 residues: Large ribosomal subunit protein bL21 (134 aa).

It belongs to the bacterial ribosomal protein bL21 family. In terms of assembly, part of the 50S ribosomal subunit. Contacts protein L20.

In terms of biological role, this protein binds to 23S rRNA in the presence of protein L20. The polypeptide is Large ribosomal subunit protein bL21 (Pelagibacter ubique (strain HTCC1062)).